Here is a 212-residue protein sequence, read N- to C-terminus: Protein-L-isoaspartate O-methyltransferase (212 aa).

Residue Ser-60 is part of the active site.

It belongs to the methyltransferase superfamily. L-isoaspartyl/D-aspartyl protein methyltransferase family.

The protein localises to the cytoplasm. The catalysed reaction is [protein]-L-isoaspartate + S-adenosyl-L-methionine = [protein]-L-isoaspartate alpha-methyl ester + S-adenosyl-L-homocysteine. Functionally, catalyzes the methyl esterification of L-isoaspartyl residues in peptides and proteins that result from spontaneous decomposition of normal L-aspartyl and L-asparaginyl residues. It plays a role in the repair and/or degradation of damaged proteins. The chain is Protein-L-isoaspartate O-methyltransferase from Pseudomonas putida (strain W619).